Here is a 1058-residue protein sequence, read N- to C-terminus: Kinesin-like protein KIN-7M, chloroplastic (1058 aa).

The N-terminal 60 residues, 1 to 60 (MASSSSRTRSRSPFSHRRPPSPYSSASSTSSSLINNRLLPRSSSTPTSTVYNSGGVTGSR), are a transit peptide targeting the chloroplast. The tract at residues 1–92 (MASSSSRTRS…QSYPSEGLIG (92 aa)) is disordered. Positions 8–19 (TRSRSPFSHRRP) are enriched in basic residues. Residues 23 to 49 (YSSASSTSSSLINNRLLPRSSSTPTST) are compositionally biased toward low complexity. The span at 50-70 (VYNSGGVTGSRSMSITRTISD) shows a compositional bias: polar residues. The Kinesin motor domain maps to 104–421 (SISVTVRFRP…LKFASRAKRI (318 aa)). 184–191 (GVTSSGKT) is a binding site for ATP. Residues 422–509 (EINASRNKII…QKLTKLILVS (88 aa)) adopt a coiled-coil conformation. The disordered stretch occupies residues 549–578 (PSSTLSLASDARRSSSKFKDENSPVGSRAE). Basic and acidic residues predominate over residues 558-570 (DARRSSSKFKDEN). Coiled coils occupy residues 621 to 658 (PENSKTQIQNLENDIQEKQRQMKSLEQRITESGEASIA), 704 to 826 (NNEL…AQKR), 873 to 904 (LEAALAEKEYIEEEFRKKAEEAKRREEALEND), and 935 to 999 (KEDE…SQAA). Residues 824-838 (QKRNNNSMNSAANRN) are compositionally biased toward low complexity. The segment at 824-847 (QKRNNNSMNSAANRNGTRPGRKAR) is disordered. The segment at 922-946 (ALSIQKSDEAEPAKEDEVTELDNKN) is disordered. Residues 927-946 (KSDEAEPAKEDEVTELDNKN) are compositionally biased toward basic and acidic residues. The segment at 1011 to 1046 (CKVCFESPTATILLPCRHFCLCKSCSLACSECPICR) adopts an RING-type zinc-finger fold.

The protein belongs to the TRAFAC class myosin-kinesin ATPase superfamily. Kinesin family. KIN-7 subfamily.

The protein resides in the plastid. It localises to the chloroplast. In Arabidopsis thaliana (Mouse-ear cress), this protein is Kinesin-like protein KIN-7M, chloroplastic.